Reading from the N-terminus, the 478-residue chain is Ribulose bisphosphate carboxylase large chain (478 aa).

The propeptide occupies 1–2; it reads MS. Pro3 carries the post-translational modification N-acetylproline. An N6,N6,N6-trimethyllysine modification is found at Lys14. The substrate site is built by Asn123 and Thr173. Lys175 functions as the Proton acceptor in the catalytic mechanism. Lys177 is a binding site for substrate. The Mg(2+) site is built by Lys201, Asp203, and Glu204. An N6-carboxylysine modification is found at Lys201. Catalysis depends on His294, which acts as the Proton acceptor. The substrate site is built by Arg295, His327, and Ser379.

It belongs to the RuBisCO large chain family. Type I subfamily. Heterohexadecamer of 8 large chains and 8 small chains; disulfide-linked. The disulfide link is formed within the large subunit homodimers. Requires Mg(2+) as cofactor. Post-translationally, the disulfide bond which can form in the large chain dimeric partners within the hexadecamer appears to be associated with oxidative stress and protein turnover.

The protein localises to the plastid. It is found in the chloroplast. It catalyses the reaction 2 (2R)-3-phosphoglycerate + 2 H(+) = D-ribulose 1,5-bisphosphate + CO2 + H2O. The catalysed reaction is D-ribulose 1,5-bisphosphate + O2 = 2-phosphoglycolate + (2R)-3-phosphoglycerate + 2 H(+). In terms of biological role, ruBisCO catalyzes two reactions: the carboxylation of D-ribulose 1,5-bisphosphate, the primary event in carbon dioxide fixation, as well as the oxidative fragmentation of the pentose substrate in the photorespiration process. Both reactions occur simultaneously and in competition at the same active site. This chain is Ribulose bisphosphate carboxylase large chain, found in Neurachne tenuifolia.